A 389-amino-acid chain; its full sequence is Endo-chitosanase C (389 aa).

Residues 1–22 (MPIKSFASRLALSLAICGTAMG) form the signal peptide. An R3-1 repeat occupies 280–313 (CSWPGHCAGFKNKGATCSSNDDCSDDLACQNGKC). One copy of the R3-2 repeat lies at 320–350 (ETCSWEGHCKGATCSSNDDCSDELACISGIC). One copy of the R3-3 repeat lies at 357–387 (ETCEWEGHCEGASCSSHDDCDGNLACKNGKC).

The protein belongs to the glycosyl hydrolase 75 family.

The protein resides in the secreted. The enzyme catalyses Endohydrolysis of beta-(1-&gt;4)-linkages between D-glucosamine residues in a partly acetylated chitosan.. Chitosanase catalyzing the endo-type cleavage of chitosan, the deacylated form of chitin. Chitosanase may be crucial in the degradation of the deacetylated portion of chitin in the fungal cell wall. Chitoolisaccharides produced by the hydrolysis of partially N-acetylated chitosan are known to have many biological activities, including antibacterial activity, immune-enhancing effects, and elicitor activity. This is Endo-chitosanase C (csnC) from Aspergillus oryzae (strain ATCC 42149 / RIB 40) (Yellow koji mold).